A 513-amino-acid polypeptide reads, in one-letter code: Zinc finger CCCH-type with G patch domain-containing protein (513 aa).

Residues 155–178 form a C3H1-type zinc finger; it reads PCSYYLEGECRFDEAKCRFSHGAL. Over residues 252-261 the composition is skewed to acidic residues; the sequence is DQDEDDELSS. The interval 252-283 is disordered; that stretch reads DQDEDDELSSEESNSSMNDNSSDEAESDMDDL. Positions 262-271 are enriched in low complexity; the sequence is EESNSSMNDN. A compositionally biased stretch (acidic residues) spans 272-283; sequence SSDEAESDMDDL. The 47-residue stretch at 312 to 358 folds into the G-patch domain; that stretch reads TRGIGSKLMEKMGYIHGTGLGSDGRGIVTPVSAQILPQGRSLDACME. Over residues 478–495 the composition is skewed to polar residues; sequence VQMQSHKQELATLQAQER. The disordered stretch occupies residues 478–513; the sequence is VQMQSHKQELATLQAQERSLSKEQQTRKSKNKMFEF. Residues 496–513 show a composition bias toward basic and acidic residues; that stretch reads SLSKEQQTRKSKNKMFEF.

The protein resides in the nucleus. In terms of biological role, transcription repressor. The chain is Zinc finger CCCH-type with G patch domain-containing protein from Drosophila melanogaster (Fruit fly).